We begin with the raw amino-acid sequence, 210 residues long: Histidine biosynthesis bifunctional protein HisIE (210 aa).

The tract at residues 1–106 (MTNYKIDFSK…SCFNTEVPFS (106 aa)) is phosphoribosyl-AMP cyclohydrolase. The interval 107 to 210 (VQTLAQTVQD…KGERQNIEQW (104 aa)) is phosphoribosyl-ATP pyrophosphohydrolase.

It in the N-terminal section; belongs to the PRA-CH family. This sequence in the C-terminal section; belongs to the PRA-PH family.

Its subcellular location is the cytoplasm. It catalyses the reaction 1-(5-phospho-beta-D-ribosyl)-ATP + H2O = 1-(5-phospho-beta-D-ribosyl)-5'-AMP + diphosphate + H(+). The catalysed reaction is 1-(5-phospho-beta-D-ribosyl)-5'-AMP + H2O = 1-(5-phospho-beta-D-ribosyl)-5-[(5-phospho-beta-D-ribosylamino)methylideneamino]imidazole-4-carboxamide. It participates in amino-acid biosynthesis; L-histidine biosynthesis; L-histidine from 5-phospho-alpha-D-ribose 1-diphosphate: step 2/9. The protein operates within amino-acid biosynthesis; L-histidine biosynthesis; L-histidine from 5-phospho-alpha-D-ribose 1-diphosphate: step 3/9. This Staphylococcus aureus (strain COL) protein is Histidine biosynthesis bifunctional protein HisIE (hisI).